The chain runs to 398 residues: 1-deoxy-D-xylulose 5-phosphate reductoisomerase (398 aa).

NADPH-binding residues include T10, G11, S12, I13, G36, R37, N38, and N124. K125 contacts 1-deoxy-D-xylulose 5-phosphate. E126 serves as a coordination point for NADPH. D150 contacts Mn(2+). Residues S151, E152, S186, and H209 each contribute to the 1-deoxy-D-xylulose 5-phosphate site. Position 152 (E152) interacts with Mn(2+). G215 serves as a coordination point for NADPH. 1-deoxy-D-xylulose 5-phosphate is bound by residues S222, N227, K228, and E231. E231 lines the Mn(2+) pocket.

The protein belongs to the DXR family. As to quaternary structure, homodimer. It depends on Mg(2+) as a cofactor. Mn(2+) is required as a cofactor.

The catalysed reaction is 2-C-methyl-D-erythritol 4-phosphate + NADP(+) = 1-deoxy-D-xylulose 5-phosphate + NADPH + H(+). It functions in the pathway isoprenoid biosynthesis; isopentenyl diphosphate biosynthesis via DXP pathway; isopentenyl diphosphate from 1-deoxy-D-xylulose 5-phosphate: step 1/6. Its function is as follows. Catalyzes the NADPH-dependent rearrangement and reduction of 1-deoxy-D-xylulose-5-phosphate (DXP) to 2-C-methyl-D-erythritol 4-phosphate (MEP). The protein is 1-deoxy-D-xylulose 5-phosphate reductoisomerase of Yersinia pseudotuberculosis serotype IB (strain PB1/+).